Here is a 333-residue protein sequence, read N- to C-terminus: L-lactate dehydrogenase A chain (333 aa).

Residues 30–58 and arginine 100 each bind NAD(+); that span reads GAVGMACAMSILMKDLADELALVDVIEDK. 3 residues coordinate substrate: arginine 107, asparagine 139, and arginine 170. Asparagine 139 contributes to the NAD(+) binding site. The active-site Proton acceptor is histidine 194. Threonine 249 provides a ligand contact to substrate.

The protein belongs to the LDH/MDH superfamily. LDH family. Homotetramer.

It localises to the cytoplasm. It carries out the reaction (S)-lactate + NAD(+) = pyruvate + NADH + H(+). The protein operates within fermentation; pyruvate fermentation to lactate; (S)-lactate from pyruvate: step 1/1. In terms of biological role, interconverts simultaneously and stereospecifically pyruvate and lactate with concomitant interconversion of NADH and NAD(+). This is L-lactate dehydrogenase A chain (LDHA) from Ambystoma mexicanum (Axolotl).